Here is a 635-residue protein sequence, read N- to C-terminus: Frizzled and smoothened-like protein C (635 aa).

Residues 1–20 form the signal peptide; sequence MKFKLIIFIIIIYIIKILKS. The Extracellular segment spans residues 21–244; the sequence is EILNEFGYGL…NKWVQMYKMS (224 aa). One can recognise an FZ domain in the interval 32–166; sequence DENLKCLSFI…LTKYGYTENN (135 aa). 2 cysteine pairs are disulfide-bonded: cysteine 37-cysteine 108 and cysteine 50-cysteine 101. 5 N-linked (GlcNAc...) asparagine glycosylation sites follow: asparagine 65, asparagine 141, asparagine 156, asparagine 185, and asparagine 203. The helical transmembrane segment at 245–265 threads the bilayer; that stretch reads IVLSTLSFICSIYNIITFGLL. Topologically, residues 266–275 are cytoplasmic; the sequence is SKLKSKYNLC. Residues 276–296 traverse the membrane as a helical segment; that stretch reads ITFFSVSTVLMSLMDIVTYGI. The Extracellular segment spans residues 297–314; the sequence is GYEELLCPESGRYAIQSD. The helical transmembrane segment at 315–335 threads the bilayer; that stretch reads VACGVTGAFFHIGITTGVLWW. Topologically, residues 336 to 356 are cytoplasmic; it reads TTMSICLYSEVKRFKMISFRY. Residues 357-377 form a helical membrane-spanning segment; the sequence is IIIFNSVISLILLIIPLSGQA. At 378–398 the chain is on the extracellular side; it reads FMSGNGSLGCWIRKTWYANGT. 2 N-linked (GlcNAc...) asparagine glycosylation sites follow: asparagine 382 and asparagine 396. A helical membrane pass occupies residues 399 to 419; the sequence is FWIPCGISLFIGAICIVLVIY. Topologically, residues 420-440 are cytoplasmic; the sequence is EIFKISRNLSKDNKPLMFQIR. Residues 441 to 461 traverse the membrane as a helical segment; the sequence is PFLCVLLVGGSFLYLFIFYFN. The Extracellular segment spans residues 462 to 496; it reads NERNLDKYKAAIPSYVQCLLSSDENGEDCLTDGPG. Residues 497–517 traverse the membrane as a helical segment; that stretch reads FGAYFTFYFFTRLFGITSFSI. Residues 518–635 are Cytoplasmic-facing; sequence YGTSKIARDI…SSKDSNTNSF (118 aa). Residues 559 to 594 are compositionally biased toward polar residues; it reads SISGSNQKRFNRNGSNFNMKQNKSNPNDSISLSVVE. The segment at 559-635 is disordered; that stretch reads SISGSNQKRF…SSKDSNTNSF (77 aa). Positions 594-623 form a coiled coil; that stretch reads ESTKKQDTENELESNIETKENRSTDISIEN. Positions 623–635 are enriched in low complexity; sequence NTTSSKDSNTNSF.

It belongs to the G-protein coupled receptor Fz/Smo family.

It is found in the membrane. In Dictyostelium discoideum (Social amoeba), this protein is Frizzled and smoothened-like protein C (fslC).